The sequence spans 256 residues: Ras-related protein Rab-26 (256 aa).

Residues 1–53 (MSRKKTPKSKAGSAPATSALPAANGPRPVRPGTARPGPEAPPNGPPQPGRSSV) form a disordered region. Residues 38–48 (PEAPPNGPPQP) show a composition bias toward pro residues. The GTP site is built by S72, G73, V74, G75, K76, T77, C78, S95, and T96. Mg(2+) is bound at residue T77. Short sequence motifs (switch) lie at residues 86-101 (GAFLAGTFISTVGIDF) and 119-136 (DTAGQERFRSVTHAYYRD). The Mg(2+) site is built by T96 and D119. Positions 122, 177, 178, 180, 208, and 209 each coordinate GTP. 2 S-geranylgeranyl cysteine lipidation sites follow: C253 and C254.

The protein belongs to the small GTPase superfamily. Rab family. The cofactor is Mg(2+).

It is found in the cell membrane. The enzyme catalyses GTP + H2O = GDP + phosphate + H(+). Its activity is regulated as follows. Regulated by guanine nucleotide exchange factors (GEFs) which promote the exchange of bound GDP for free GTP. Regulated by GTPase activating proteins (GAPs) which increase the GTP hydrolysis activity. Inhibited by GDP dissociation inhibitors (GDIs). The small GTPases Rab are key regulators of intracellular membrane trafficking, from the formation of transport vesicles to their fusion with membranes. Rabs cycle between an inactive GDP-bound form and an active GTP-bound form that is able to recruit to membranes different set of downstream effectors directly responsible for vesicle formation, movement, tethering and fusion. RAB26 mediates transport of ADRA2A and ADRA2B from the Golgi to the cell membrane. Plays a role in the maturation of zymogenic granules and in pepsinogen secretion in the stomach. Plays a role in the secretion of amylase from acinar granules in the parotid gland. In Bos taurus (Bovine), this protein is Ras-related protein Rab-26 (RAB26).